Consider the following 265-residue polypeptide: 4-hydroxy-tetrahydrodipicolinate reductase (265 aa).

NAD(+)-binding positions include 7–12 (GASGRM), aspartate 33, 96–98 (GTT), and 120–123 (AANF). The active-site Proton donor/acceptor is the histidine 153. Histidine 154 provides a ligand contact to (S)-2,3,4,5-tetrahydrodipicolinate. The active-site Proton donor is the lysine 157. Residue 163 to 164 (GT) coordinates (S)-2,3,4,5-tetrahydrodipicolinate.

It belongs to the DapB family.

It localises to the cytoplasm. The enzyme catalyses (S)-2,3,4,5-tetrahydrodipicolinate + NAD(+) + H2O = (2S,4S)-4-hydroxy-2,3,4,5-tetrahydrodipicolinate + NADH + H(+). The catalysed reaction is (S)-2,3,4,5-tetrahydrodipicolinate + NADP(+) + H2O = (2S,4S)-4-hydroxy-2,3,4,5-tetrahydrodipicolinate + NADPH + H(+). It functions in the pathway amino-acid biosynthesis; L-lysine biosynthesis via DAP pathway; (S)-tetrahydrodipicolinate from L-aspartate: step 4/4. Catalyzes the conversion of 4-hydroxy-tetrahydrodipicolinate (HTPA) to tetrahydrodipicolinate. This is 4-hydroxy-tetrahydrodipicolinate reductase from Cupriavidus necator (strain ATCC 17699 / DSM 428 / KCTC 22496 / NCIMB 10442 / H16 / Stanier 337) (Ralstonia eutropha).